Consider the following 232-residue polypeptide: Enolase-phosphatase E1 (232 aa).

Belongs to the HAD-like hydrolase superfamily. MasA/MtnC family. As to quaternary structure, monomer. Mg(2+) serves as cofactor.

The catalysed reaction is 5-methylsulfanyl-2,3-dioxopentyl phosphate + H2O = 1,2-dihydroxy-5-(methylsulfanyl)pent-1-en-3-one + phosphate. It functions in the pathway amino-acid biosynthesis; L-methionine biosynthesis via salvage pathway; L-methionine from S-methyl-5-thio-alpha-D-ribose 1-phosphate: step 3/6. Its pathway is amino-acid biosynthesis; L-methionine biosynthesis via salvage pathway; L-methionine from S-methyl-5-thio-alpha-D-ribose 1-phosphate: step 4/6. Bifunctional enzyme that catalyzes the enolization of 2,3-diketo-5-methylthiopentyl-1-phosphate (DK-MTP-1-P) into the intermediate 2-hydroxy-3-keto-5-methylthiopentenyl-1-phosphate (HK-MTPenyl-1-P), which is then dephosphorylated to form the acireductone 1,2-dihydroxy-3-keto-5-methylthiopentene (DHK-MTPene). This Xylella fastidiosa (strain Temecula1 / ATCC 700964) protein is Enolase-phosphatase E1.